The chain runs to 472 residues: MAGPSWGLPRLDGFILTERLGSGTYATVYKAYAKKDTREVVAIKCVAKKSLNKASVENLLTEIEILKGIRHPHIVQLKDFQWDNDNIYLIMEFCAGGDLSRFIHTRRILPEKVARVFMQQLASALQFLHERNISHLDLKPQNILLSSLEKPHLKLADFGFAQHMSPWDEKHVLRGSPLYMAPEMVCRRQYDARVDLWSVGVILYEALFGQPPFASRSFSELEEKIRSNRVIELPLRPQLSLDCRDLLQRLLERDPARRISFKDFFAHPWVDLEHMPSGESLAQARALVVEAVKKDQEGDAAAALSLYCKALDFFVPALHYEVDAQRKEAIKAKVGQYVSRAEELKAIVSSSNQALLRQGTTVQELLREMARDKPRLLAALEVASAALAKEEEAGKEQDALDLYQHSLGELLVLLAAEAPGRRRELLHTEVQNLMARAEYLKEQIKIRESHWEAESLDKEGLSESVRSSCTLQ.

Residues F14–V270 form the Protein kinase domain. ATP contacts are provided by residues L20–V28 and K44. D137 functions as the Proton acceptor in the catalytic mechanism. S176 carries the phosphoserine modification. The MIT 1 domain occupies S280 to V348. A phosphoserine; by autocatalysis mark is found at S350, S384, and S464. In terms of domain architecture, MIT 2 spans R375–I444.

Belongs to the protein kinase superfamily. Ser/Thr protein kinase family. APG1/unc-51/ULK1 subfamily. As to quaternary structure, interacts (via protein kinase domain) with SUFU. Autophosphorylated. Autophosphorylation is blocked by interaction with SUFU.

Its subcellular location is the cytoplasm. It catalyses the reaction L-seryl-[protein] + ATP = O-phospho-L-seryl-[protein] + ADP + H(+). It carries out the reaction L-threonyl-[protein] + ATP = O-phospho-L-threonyl-[protein] + ADP + H(+). Functionally, serine/threonine protein kinase that acts as a regulator of Sonic hedgehog (SHH) signaling and autophagy. Acts as a negative regulator of SHH signaling in the absence of SHH ligand: interacts with SUFU, thereby inactivating the protein kinase activity and preventing phosphorylation of GLI proteins (GLI1, GLI2 and/or GLI3). Positively regulates SHH signaling in the presence of SHH: dissociates from SUFU, autophosphorylates and mediates phosphorylation of GLI2, activating it and promoting its nuclear translocation. Phosphorylates in vitro GLI2, as well as GLI1 and GLI3, although less efficiently. Also acts as a regulator of autophagy: following cellular senescence, able to induce autophagy. This chain is Serine/threonine-protein kinase ULK3 (Ulk3), found in Mus musculus (Mouse).